We begin with the raw amino-acid sequence, 74 residues long: Putative membrane protein insertion efficiency factor (74 aa).

This sequence belongs to the UPF0161 family.

It is found in the cell inner membrane. Could be involved in insertion of integral membrane proteins into the membrane. The protein is Putative membrane protein insertion efficiency factor of Anaeromyxobacter sp. (strain Fw109-5).